A 478-amino-acid polypeptide reads, in one-letter code: Septin-4 (478 aa).

The interval 38-115 is disordered; the sequence is VKDFSGNESC…RSPWGKLDPY (78 aa). The span at 95 to 108 shows a compositional bias: low complexity; the sequence is APAPLSPSARPRSP. A phosphoserine mark is found at Ser-117 and Ser-118. A Septin-type G domain is found at 141–414; it reads KGFDFTLMVA…ENYRAQCIQS (274 aa). The interval 151-158 is G1 motif; that stretch reads GESGLGKS. Residues 151–158 and Thr-185 contribute to the GTP site; that span reads GESGLGKS. The segment at 208-211 is G3 motif; the sequence is DTPG. A G4 motif region spans residues 289-292; it reads AKAD. 290-298 provides a ligand contact to GTP; it reads KADTLTPPE. The residue at position 325 (Ser-325) is a Phosphoserine. 2 residues coordinate GTP: Gly-348 and Arg-363. Residues 425–448 are disordered; sequence RNKLTRESGTDLPIPAVPPGTDPE. At Ser-432 the chain carries Phosphoserine. Thr-434 is subject to Phosphothreonine. A coiled-coil region spans residues 446–478; the sequence is DPETEKLIREKDEELRRMQEMLHKIQKQMKETY.

This sequence belongs to the TRAFAC class TrmE-Era-EngA-EngB-Septin-like GTPase superfamily. Septin GTPase family. As to quaternary structure, septins polymerize into heterooligomeric protein complexes that form filaments, and can associate with cellular membranes, actin filaments and microtubules. GTPase activity is required for filament formation. Interacts with SEPTIN8. Component of a septin core octameric complex consisting of SEPTIN12, SEPTIN7, SEPTIN6 and SEPTIN2 or SEPTIN4 in the order 12-7-6-2-2-6-7-12 or 12-7-6-4-4-6-7-12. Interacts with SEPTIN14 (via C-terminus). Interacts with DYRK1A. Interacts with SLC6A3/DAT and SNCA/alpha-synuclein. Interacts with STX1A; in the striatum. Interacts with XIAP (via BIR3 domain) following the induction of apoptosis. Interacts with AREL1 (via HECT domain); in the cytoplasm following induction of apoptosis. In terms of processing, ubiquitinated by AREL1. Post-translationally, phosphorylated by DYRK1A.

The protein resides in the cytoplasm. Its subcellular location is the cell projection. The protein localises to the cilium. It is found in the flagellum. It localises to the cytoplasmic vesicle. The protein resides in the secretory vesicle. Its subcellular location is the axon. The protein localises to the dendrite. It is found in the perikaryon. It localises to the synapse. Functionally, filament-forming cytoskeletal GTPase. Pro-apoptotic protein involved in LGR5-positive intestinal stem cell and Paneth cell expansion in the intestines, via its interaction with XIAP. May also play a role in the regulation of cell fate in the intestine. Positive regulator of apoptosis involved in hematopoietic stem cell homeostasis; via its interaction with XIAP. Negative regulator of repair and hair follicle regeneration in response to injury, due to inhibition of hair follicle stem cell proliferation, potentially via its interaction with XIAP. Plays an important role in male fertility and sperm motility. During spermiogenesis, essential for the establishment of the annulus (a fibrous ring structure connecting the midpiece and the principal piece of the sperm flagellum) which is a requisite for the structural and mechanical integrity of the sperm. Involved in the migration of cortical neurons and the formation of neuron leading processes during embryonic development. Required for dopaminergic metabolism in presynaptic autoreceptors; potentially via activity as a presynaptic scaffold protein. The sequence is that of Septin-4 from Pongo abelii (Sumatran orangutan).